Reading from the N-terminus, the 860-residue chain is DNA mismatch repair protein MutS (860 aa).

Residue 606-613 (GPNMSGKS) coordinates ATP.

The protein belongs to the DNA mismatch repair MutS family.

Functionally, this protein is involved in the repair of mismatches in DNA. It is possible that it carries out the mismatch recognition step. This protein has a weak ATPase activity. The protein is DNA mismatch repair protein MutS of Geobacillus sp. (strain WCH70).